Here is a 736-residue protein sequence, read N- to C-terminus: Exo-oligoalginate lyase (736 aa).

The N-terminal stretch at 1–23 (MLSVNTIKNTLLAAVLVSVPATA) is a signal peptide. Substrate-binding positions include Lys136, 146–149 (QSLN), Lys198, His202, and 257–260 (YYQR). Catalysis depends on Tyr258, which acts as the Proton donor. His413 (proton acceptor) is an active-site residue. Zn(2+) contacts are provided by His415 and Asp433. Residue Arg438 participates in substrate binding. His464 is a binding site for Zn(2+). Substrate is bound at residue Glu667.

Belongs to the polysaccharide lyase 17 family. In terms of assembly, homodimer. The cofactor is Zn(2+).

Its subcellular location is the periplasm. The catalysed reaction is Cleavage of 4-deoxy-alpha-L-erythro-hex-4-enopyranuronoside oligosaccharides into 4-deoxy-alpha-L-erythro-hex-4-enopyranuronate monosaccharides.. In terms of biological role, catalyzes the depolymerization of alginate through an exolytic mode of action, via a beta-elimination mechanism. Preferentially acts on oligoalginates with degrees of polymerization higher than 2 to produce the alginate monomer, 4-deoxy-L-erythro-5-hexoseulose uronic acid. The polypeptide is Exo-oligoalginate lyase (Saccharophagus degradans (strain 2-40 / ATCC 43961 / DSM 17024)).